Here is an 89-residue protein sequence, read N- to C-terminus: Small ribosomal subunit protein uS15 (89 aa).

It belongs to the universal ribosomal protein uS15 family. In terms of assembly, part of the 30S ribosomal subunit. Forms a bridge to the 50S subunit in the 70S ribosome, contacting the 23S rRNA.

In terms of biological role, one of the primary rRNA binding proteins, it binds directly to 16S rRNA where it helps nucleate assembly of the platform of the 30S subunit by binding and bridging several RNA helices of the 16S rRNA. Forms an intersubunit bridge (bridge B4) with the 23S rRNA of the 50S subunit in the ribosome. This is Small ribosomal subunit protein uS15 from Methylobacterium nodulans (strain LMG 21967 / CNCM I-2342 / ORS 2060).